Consider the following 525-residue polypeptide: Glutamate--cysteine ligase (525 aa).

Belongs to the glutamate--cysteine ligase type 1 family. Type 1 subfamily.

It carries out the reaction L-cysteine + L-glutamate + ATP = gamma-L-glutamyl-L-cysteine + ADP + phosphate + H(+). It participates in sulfur metabolism; glutathione biosynthesis; glutathione from L-cysteine and L-glutamate: step 1/2. The protein is Glutamate--cysteine ligase of Pseudoalteromonas translucida (strain TAC 125).